The following is a 128-amino-acid chain: Small ribosomal subunit protein uS11 (128 aa).

Belongs to the universal ribosomal protein uS11 family. Part of the 30S ribosomal subunit. Interacts with proteins S7 and S18. Binds to IF-3.

Functionally, located on the platform of the 30S subunit, it bridges several disparate RNA helices of the 16S rRNA. Forms part of the Shine-Dalgarno cleft in the 70S ribosome. The protein is Small ribosomal subunit protein uS11 of Synechococcus sp. (strain JA-3-3Ab) (Cyanobacteria bacterium Yellowstone A-Prime).